The following is a 469-amino-acid chain: Ribulose bisphosphate carboxylase large chain (469 aa).

Residue Lys8 is modified to N6,N6,N6-trimethyllysine. Substrate-binding residues include Asn117 and Thr167. Catalysis depends on Lys169, which acts as the Proton acceptor. Lys171 serves as a coordination point for substrate. Positions 195, 197, and 198 each coordinate Mg(2+). An N6-carboxylysine modification is found at Lys195. Catalysis depends on His288, which acts as the Proton acceptor. Arg289, His321, and Ser373 together coordinate substrate.

This sequence belongs to the RuBisCO large chain family. Type I subfamily. In terms of assembly, heterohexadecamer of 8 large chains and 8 small chains; disulfide-linked. The disulfide link is formed within the large subunit homodimers. Mg(2+) is required as a cofactor. In terms of processing, the disulfide bond which can form in the large chain dimeric partners within the hexadecamer appears to be associated with oxidative stress and protein turnover.

It is found in the plastid. The protein resides in the chloroplast. The catalysed reaction is 2 (2R)-3-phosphoglycerate + 2 H(+) = D-ribulose 1,5-bisphosphate + CO2 + H2O. It catalyses the reaction D-ribulose 1,5-bisphosphate + O2 = 2-phosphoglycolate + (2R)-3-phosphoglycerate + 2 H(+). Functionally, ruBisCO catalyzes two reactions: the carboxylation of D-ribulose 1,5-bisphosphate, the primary event in carbon dioxide fixation, as well as the oxidative fragmentation of the pentose substrate in the photorespiration process. Both reactions occur simultaneously and in competition at the same active site. The polypeptide is Ribulose bisphosphate carboxylase large chain (Coleonema pulchellum (Confetti bush)).